We begin with the raw amino-acid sequence, 249 residues long: uncharacterized protein (249 aa).

2 stretches are compositionally biased toward polar residues: residues 66-79 and 92-119; these read NASLESGQSSTISP and ASGSVSANKTFQSTESSALHQPKSSSSE. The tract at residues 66-142 is disordered; the sequence is NASLESGQSS…GPTSPRVTPG (77 aa).

It is found in the plastid. Its subcellular location is the chloroplast. This is an uncharacterized protein from Chlorella vulgaris (Green alga).